The primary structure comprises 1310 residues: Clustered mitochondria protein homolog (1310 aa).

Positions 375-619 (DITRSQESYL…RVTPLDVVWQ (245 aa)) constitute a Clu domain. The span at 662 to 682 (KAQEDAANKEQPSETTESKEG) shows a compositional bias: basic and acidic residues. Disordered stretches follow at residues 662 to 692 (KAQE…EEAL) and 931 to 960 (VANG…SRAV). 3 TPR repeats span residues 1033-1066 (AKLY…TERT), 1075-1108 (ILAY…WKII), and 1117-1150 (ITTM…CESL). 2 disordered regions span residues 1245-1266 (VQPQ…ANAS) and 1281-1310 (GGDA…KSSA).

This sequence belongs to the CLU family. May associate with the eukaryotic translation initiation factor 3 (eIF-3) complex.

The protein localises to the cytoplasm. MRNA-binding protein involved in proper cytoplasmic distribution of mitochondria. This is Clustered mitochondria protein homolog from Aspergillus fumigatus (strain CBS 144.89 / FGSC A1163 / CEA10) (Neosartorya fumigata).